The chain runs to 321 residues: Probable GDP-L-fucose synthase (321 aa).

8 to 14 (GGTGLVG) serves as a coordination point for NADP(+). The Proton donor/acceptor role is filled by tyrosine 136. Residues lysine 140, 163–166 (PCNI), and histidine 179 contribute to the NADP(+) site. Positions 187, 215, and 277 each coordinate substrate.

It belongs to the NAD(P)-dependent epimerase/dehydratase family. Fucose synthase subfamily. As to quaternary structure, homodimer.

It carries out the reaction GDP-beta-L-fucose + NADP(+) = GDP-4-dehydro-alpha-D-rhamnose + NADPH + H(+). Its pathway is nucleotide-sugar biosynthesis; GDP-L-fucose biosynthesis via de novo pathway; GDP-L-fucose from GDP-alpha-D-mannose: step 2/2. Functionally, catalyzes the two-step NADP-dependent conversion of GDP-4-dehydro-6-deoxy-D-mannose to GDP-fucose, involving an epimerase and a reductase reaction. The polypeptide is Probable GDP-L-fucose synthase (Gmer) (Drosophila melanogaster (Fruit fly)).